Here is a 1231-residue protein sequence, read N- to C-terminus: RNA-binding protein 33 (1231 aa).

Residues 1–13 (MAAALGAGGGAGA) are compositionally biased toward gly residues. Disordered stretches follow at residues 1 to 168 (MAAA…EEEQ) and 219 to 261 (SQVA…FKTE). The residue at position 2 (Ala-2) is an N-acetylalanine. A compositionally biased stretch (basic and acidic residues) spans 20-36 (QFDKPGAERSWRRRAAD). Over residues 37–49 (EDWDSELEDDLLG) the composition is skewed to acidic residues. At Ser-41 the chain carries Phosphoserine. Residues 82–108 (FSSQGVTISLNTTSGIVTSFELSDNTN) show a composition bias toward polar residues. 2 stretches are compositionally biased toward acidic residues: residues 112-124 (GEQESEYEQGDDE) and 153-168 (LTEDQIEYGDEPEEEQ). Residues 224–240 (ETHEGGMETLELQKDIK) show a composition bias toward basic and acidic residues. A compositionally biased stretch (acidic residues) spans 241–252 (EESDEEDDDDEE). Ser-243 and Ser-271 each carry phosphoserine. 2 disordered regions span residues 297–436 (FEER…KNIH) and 452–761 (PLLP…NLRE). Residues 305–316 (KQGRYGSRRGGR) are compositionally biased toward basic residues. A compositionally biased stretch (basic and acidic residues) spans 327-344 (GDQRRDNSERGRMKEHRP). The segment covering 360 to 379 (LIPPPQPQPPPPPPPPPPQQ) has biased composition (pro residues). Positions 380-398 (QPIRSLFQQQQLQPLLPLQ) are enriched in low complexity. The segment covering 469 to 483 (FPGPPEFPQHTPGPV) has biased composition (pro residues). Arg-520 carries the asymmetric dimethylarginine modification. Pro residues-rich tracts occupy residues 531-540 (SPPPPPPPPT), 604-618 (FIPPRQPFLPSPGQP), 632-647 (LHPPLPPPHQPQPQPQ), and 661-682 (PLQPPLQPPHQPPPQHQPPPQH). Polar residues-rich tracts occupy residues 713 to 728 (QTAQPQPSSSRMQCTP) and 736 to 759 (AASQNISKRPMQQMQPTAPRNSNL). 2 positions are modified to phosphoserine: Ser-792 and Ser-816. Disordered stretches follow at residues 796–840 (RAVV…ETRL), 876–932 (ERLA…FPGA), and 998–1080 (ETPH…MRQQ). Basic and acidic residues predominate over residues 820–829 (QPKEEAKPEA). Residues 840 to 891 (LYRLKIEEQKRLREEILKQKELRRQQQAGARKKELLERLAQQQQQQQQQQHQ) adopt a coiled-coil conformation. Residues 880-901 (QQQQQQQQQQHQPQQQQQQPQQ) are compositionally biased toward low complexity. Phosphoserine occurs at positions 1002 and 1010. Lys-1019 is covalently cross-linked (Glycyl lysine isopeptide (Lys-Gly) (interchain with G-Cter in SUMO2)). Residues Ser-1032 and Ser-1051 each carry the phosphoserine modification.

As to quaternary structure, associates with the NXF1-NXT1 RNA export complex. Interacts with ALKBH5; facilitating ALKBH5 recruitment to m6A-containing transcripts. Interacts with SENP1; promoting ALKBH5 deSUMOylation and subsequent activation.

It localises to the nucleus. Its subcellular location is the cytoplasm. RNA reader protein, which recognizes and binds specific RNAs, thereby regulating RNA metabolic processes, such as mRNA export, mRNA stability and/or translation. Binds a subset of intronless RNAs containing GC-rich elements, such as NORAD, and promotes their nuclear export by recruiting target RNAs to components of the NXF1-NXT1 RNA export machinery. Specifically recognizes and binds N6-methyladenosine (m6A)-containing mRNAs, promoting their demethylation by ALKBH5. Acts as an molecular adapter, which (1) promotes ALKBH5 recruitment to m6A-containing transcripts and (2) activates ALKBH5 demethylase activity by recruiting SENP1, leading to ALKBH5 deSUMOylation and subsequent activation. This is RNA-binding protein 33 from Mus musculus (Mouse).